We begin with the raw amino-acid sequence, 753 residues long: MAP/microtubule affinity-regulating kinase 3 (753 aa).

Positions 1–36 (MSTRTPLPTVNERDTENHTSHGDGRQEVTSRTSRSG) are disordered. Positions 11 to 28 (NERDTENHTSHGDGRQEV) are enriched in basic and acidic residues. A Phosphoserine modification is found at Ser-42. A Protein kinase domain is found at 56–307 (YRLLKTIGKG…LEQIMKDRWI (252 aa)). Residues 62-70 (IGKGNFAKV) and Lys-85 contribute to the ATP site. Asp-178 serves as the catalytic Proton acceptor. Thr-211 is subject to Phosphothreonine; by LKB1. The region spanning 326-365 (ISDQKRIDIMVGMGYSQEEIQESLSKMKYDEITATYLLLG) is the UBA domain. Ser-368, Ser-374, Ser-376, Ser-380, Ser-383, Leu-384, Ser-400, Arg-407, Ser-419, and Ser-469 each carry phosphoserine. The segment at 370–600 (ELDASDSSSS…TPLSQTRSRG (231 aa)) is disordered. Over residues 374–385 (SDSSSSSNLSLA) the composition is skewed to low complexity. Residues 391 to 400 (SDLNNSTGQS) show a composition bias toward polar residues. Composition is skewed to polar residues over residues 490–513 (STVP…CSER) and 521–548 (VIQN…SSAA). Residues Ser-540 and Ser-543 each carry the phosphoserine modification. Position 549 is a phosphothreonine (Thr-549). Thr-564 carries the post-translational modification Phosphothreonine; by PKC/PRKCZ. A phosphoserine mark is found at Ser-583, Ser-598, Ser-601, and Ser-643. Polar residues predominate over residues 584 to 600 (PSLSHEATPLSQTRSRG). Positions 632-655 (NGRYEGSSRNVSAEQKDENKEAKP) are disordered. The span at 645 to 655 (EQKDENKEAKP) shows a compositional bias: basic and acidic residues. A KA1 domain is found at 704–753 (DGHAENLVQWEMEVCKLPRLSLNGVRFKRISGTSIAFKNIASKIANELKL).

Belongs to the protein kinase superfamily. CAMK Ser/Thr protein kinase family. SNF1 subfamily. As to quaternary structure, interacts with MAPT/TAU. Interacts with DLG5 (via coiled-coil domain). Interacts with STK3/MST2 and STK4/MST1 in the presence of DLG5. Interacts with YWHAB, YWHAG, YWHAQ and YWHAZ. Interacts with PKP2 (via N-terminus). Interacts with CDC25C. Interacts with KSR1. Post-translationally, phosphorylated at Thr-211 by STK11/LKB1 in complex with STE20-related adapter-alpha (STRADA) pseudo kinase and CAB39. Phosphorylation at Thr-564 by PRKCZ/aPKC inhibits the kinase activity. Ubiquitous.

Its subcellular location is the cell membrane. The protein localises to the cell projection. The protein resides in the dendrite. It localises to the cytoplasm. It carries out the reaction L-seryl-[protein] + ATP = O-phospho-L-seryl-[protein] + ADP + H(+). The catalysed reaction is L-threonyl-[protein] + ATP = O-phospho-L-threonyl-[protein] + ADP + H(+). Its activity is regulated as follows. Activated by phosphorylation on Thr-211. Inhibited by phosphorylation on Thr-564. In terms of biological role, serine/threonine-protein kinase. Involved in the specific phosphorylation of microtubule-associated proteins for MAP2 and MAP4. Phosphorylates the microtubule-associated protein MAPT/TAU. Phosphorylates CDC25C on 'Ser-216'. Regulates localization and activity of some histone deacetylases by mediating phosphorylation of HDAC7, promoting subsequent interaction between HDAC7 and 14-3-3 and export from the nucleus. Regulates localization and activity of MITF by mediating its phosphorylation, promoting subsequent interaction between MITF and 14-3-3 and retention in the cytosol. Negatively regulates the Hippo signaling pathway and antagonizes the phosphorylation of LATS1. Cooperates with DLG5 to inhibit the kinase activity of STK3/MST2 toward LATS1. Phosphorylates PKP2 and KSR1. This Homo sapiens (Human) protein is MAP/microtubule affinity-regulating kinase 3 (MARK3).